Here is a 598-residue protein sequence, read N- to C-terminus: Nitrate/nitrite sensor protein NarX (598 aa).

Over 1–14 (MLKRCLSPLTLVNQ) the chain is Cytoplasmic. A helical transmembrane segment spans residues 15–37 (VALIVLLSTAIGLAGMAVSGWLV). The Periplasmic portion of the chain corresponds to 38–151 (QGVQGSAHAI…DRTTEMRIET (114 aa)). A helical membrane pass occupies residues 152–174 (VVLVHRVMAVFMALLLVFTIIWL). Residues 175-598 (RARLLQPWRQ…FTDVQGDTHE (424 aa)) are Cytoplasmic-facing. The region spanning 176-228 (ARLLQPWRQLLAMASAVSHRDFTQRANISGRNEMAMLGTALNNMSAELAESYA) is the HAMP domain. The region spanning 393–587 (TIARELHDSI…EVVVTFIPEK (195 aa)) is the Histidine kinase domain. At histidine 399 the chain carries Phosphohistidine; by autocatalysis.

It localises to the cell inner membrane. The enzyme catalyses ATP + protein L-histidine = ADP + protein N-phospho-L-histidine.. Acts as a sensor for nitrate/nitrite and transduces signal of nitrate availability to the NarL protein and of both nitrate/nitrite to the NarP protein. NarX probably activates NarL and NarP by phosphorylation in the presence of nitrate. NarX also plays a negative role in controlling NarL activity, probably through dephosphorylation in the absence of nitrate. This Escherichia coli O157:H7 protein is Nitrate/nitrite sensor protein NarX (narX).